Here is an 813-residue protein sequence, read N- to C-terminus: Valine--tRNA ligase (813 aa).

The short motif at 46–56 is the 'HIGH' region element; the sequence is PTVSGQLHIGH. The short motif at 536 to 540 is the 'KMSKS' region element; it reads KMSKS. Lys-539 contacts ATP.

This sequence belongs to the class-I aminoacyl-tRNA synthetase family. ValS type 2 subfamily. As to quaternary structure, monomer.

The protein resides in the cytoplasm. The enzyme catalyses tRNA(Val) + L-valine + ATP = L-valyl-tRNA(Val) + AMP + diphosphate. In terms of biological role, catalyzes the attachment of valine to tRNA(Val). As ValRS can inadvertently accommodate and process structurally similar amino acids such as threonine, to avoid such errors, it has a 'posttransfer' editing activity that hydrolyzes mischarged Thr-tRNA(Val) in a tRNA-dependent manner. In Rickettsia canadensis (strain McKiel), this protein is Valine--tRNA ligase.